The following is a 724-amino-acid chain: Pediocin PA-1 transport/processing ATP-binding protein PedD (724 aa).

Residues 13-140 (QVDENDCGLA…KEWTQIAIII (128 aa)) enclose the Peptidase C39 domain. The active site involves C19. 6 helical membrane-spanning segments follow: residues 170–190 (IGLI…GAYF), 207–227 (LSLV…INYI), 284–304 (TTLT…FLAY), 307–327 (INLF…VWLF), 396–416 (IKAA…TFFV), and 426–446 (LLTY…IINL). One can recognise an ABC transmembrane type-1 domain in the interval 170 to 452 (IGLIITAAAI…IINLQPKLQA (283 aa)). An ABC transporter domain is found at 486–722 (IEVNHVSFNY…NGYYARLIHN (237 aa)). ATP is bound at residue 519–526 (GMSGSGKT).

Belongs to the ABC transporter superfamily. Pediocin PA-1 exporter (TC 3.A.1.112.2) family.

The protein localises to the cell membrane. Functionally, involved in the export process of the bacteriocin pediocin PA-1/AcH. Is also essential for pediocin production. In Pediococcus acidilactici, this protein is Pediocin PA-1 transport/processing ATP-binding protein PedD (pedD).